We begin with the raw amino-acid sequence, 431 residues long: Transmembrane protease serine 11C (431 aa).

The Cytoplasmic segment spans residues 1 to 33 (MARGQPRRSEEQWTALQNRTECKTKIKLTRCGK). Residues 34–54 (ITLGILTAVLAAVLIGLIAYF) traverse the membrane as a helical; Signal-anchor for type II membrane protein segment. Residues 55–431 (AACGKDSFYY…RDWITSKTGL (377 aa)) lie on the Extracellular side of the membrane. Positions 60-177 (DSFYYHVSFK…SSFKFSDIAM (118 aa)) constitute an SEA domain. N-linked (GlcNAc...) asparagine glycosylation occurs at Asn-99. Residues 200–430 (VAGGQDAEEG…YRDWITSKTG (231 aa)) form the Peptidase S1 domain. Cys-225 and Cys-241 are oxidised to a cystine. His-240 functions as the Charge relay system in the catalytic mechanism. N-linked (GlcNAc...) asparagine glycosylation is present at Asn-276. Asp-285 serves as the catalytic Charge relay system. The N-linked (GlcNAc...) asparagine glycan is linked to Asn-347. Disulfide bonds link Cys-350/Cys-366 and Cys-377/Cys-406. The Charge relay system role is filled by Ser-381.

This sequence belongs to the peptidase S1 family. Post-translationally, proteolytically cleaved via an autocatalytic mechanism. In terms of tissue distribution, expressed specifically in Purkinje neurons of the cerebellum (at protein level). Also detected in spinal cord.

Its subcellular location is the cell membrane. It localises to the cell projection. The protein resides in the dendrite. The protein localises to the perikaryon. Serine protease which has a preference for Arg or Lys in position P1 and uncharged residues in positions P2 and P3. Shows specificity towards FGF2 in vitro. This is Transmembrane protease serine 11C from Mus musculus (Mouse).